The primary structure comprises 101 residues: Urease subunit beta (101 aa).

The protein belongs to the urease beta subunit family. As to quaternary structure, heterotrimer of UreA (gamma), UreB (beta) and UreC (alpha) subunits. Three heterotrimers associate to form the active enzyme.

It localises to the cytoplasm. It carries out the reaction urea + 2 H2O + H(+) = hydrogencarbonate + 2 NH4(+). It functions in the pathway nitrogen metabolism; urea degradation; CO(2) and NH(3) from urea (urease route): step 1/1. In Haemophilus influenzae (strain 86-028NP), this protein is Urease subunit beta.